Consider the following 266-residue polypeptide: Electron transfer flavoprotein subunit beta (266 aa).

Belongs to the ETF beta-subunit/FixA family. Heterodimer of an alpha and a beta subunit. Requires FAD as cofactor. The cofactor is AMP.

The electron transfer flavoprotein serves as a specific electron acceptor for other dehydrogenases. It transfers the electrons to the main respiratory chain via ETF-ubiquinone oxidoreductase (ETF dehydrogenase). The sequence is that of Electron transfer flavoprotein subunit beta (etfB) from Mycobacterium leprae (strain TN).